The primary structure comprises 894 residues: Phosphoenolpyruvate carboxylase (894 aa).

Active-site residues include histidine 143 and lysine 556.

It belongs to the PEPCase type 1 family. Requires Mg(2+) as cofactor.

The catalysed reaction is oxaloacetate + phosphate = phosphoenolpyruvate + hydrogencarbonate. Functionally, forms oxaloacetate, a four-carbon dicarboxylic acid source for the tricarboxylic acid cycle. This is Phosphoenolpyruvate carboxylase from Acinetobacter baylyi (strain ATCC 33305 / BD413 / ADP1).